Consider the following 340-residue polypeptide: MADKLVPSSPADASEPLFSFGVIADIQYADLEDGYNYQRSRRRYYRHSLIHLQGAIEDWNKESSMPCCVLQLGDIIDGYNAQYKVSEKSLELVMNTFQMLKVPVHHTWGNHEFYNFSRDYLASSKLNSKFLEDQIAQHPETTPSENYYAYHFVPFPKFRFILLDSYDLSVLGIDPSSPKYEQCMKMLREHNPNVELNSPQGLSEPQYVQFNGGFSQEQLNWLNEVLTFSDTNQEKVVIVSHLPIYPEASDSVCLAWNYVDALSIIWSHKCVVCFLAGHTHDGGYSEDPFGVHHVNLEGVIETAPDSQAFGTVHVFPDKMLLKGRGRVPDRIMNYKREEAL.

The residue at position 1 (Met1) is an N-acetylmethionine. Zn(2+) is bound by residues Asp25, Gln27, Asp74, Asn110, His241, His278, and His280.

This sequence belongs to the ADPRibase-Mn family. As to quaternary structure, monomer. Requires Mg(2+) as cofactor.

The catalysed reaction is CDP-choline + H2O = phosphocholine + CMP + 2 H(+). The enzyme catalyses ADP-D-ribose + H2O = D-ribose 5-phosphate + AMP + 2 H(+). It catalyses the reaction CDP-glycerol + H2O = sn-glycerol 3-phosphate + CMP + 2 H(+). Functionally, hydrolyzes ADP-ribose, IDP-ribose, CDP-glycerol, CDP-choline and CDP-ethanolamine, but not other non-reducing ADP-sugars or CDP-glucose. May be involved in immune cell signaling as suggested by the second-messenger role of ADP-ribose, which activates TRPM2 as a mediator of oxidative/nitrosative stress. The polypeptide is Manganese-dependent ADP-ribose/CDP-alcohol diphosphatase (Adprm) (Mus musculus (Mouse)).